Here is a 258-residue protein sequence, read N- to C-terminus: Agamous-like MADS-box protein AGL3 (258 aa).

An MADS-box domain is found at 3–57; it reads RGKVELKRIENKINRQVTFAKRRNGLLKKAYELSVLCDAEIALLIFSNRGKLYEF. Positions 88–178 constitute a K-box domain; sequence LQDKYQDYLK…RRKLEDSDAA (91 aa). The interval 186-214 is disordered; it reads SSAAEQQQQHQQQQQGMSSYQSNPPIQEA. Positions 191 to 200 are enriched in low complexity; it reads QQQQHQQQQQ. The segment covering 201-210 has biased composition (polar residues); that stretch reads GMSSYQSNPP.

As to quaternary structure, forms homodimers. Interacts with TT16/AGL32. As to expression, expressed in aerial vegetative organs and flowers, but not in roots. Expressed in flower primordia.

The protein resides in the nucleus. In terms of biological role, probable transcription factor that binds specifically to the CArG box DNA sequence 5'-CC (A/T)6 GG-3'. Plays an important role in the determination of flower meristem identity. Involved in the specification of sepal identity. Contributes to the development of petals, stamens and carpels. This chain is Agamous-like MADS-box protein AGL3 (AGL3), found in Arabidopsis thaliana (Mouse-ear cress).